Here is a 760-residue protein sequence, read N- to C-terminus: Elongation factor G, mitochondrial (760 aa).

A mitochondrion-targeting transit peptide spans 1–37 (MIRGMLPRGLRALRPSVSPTVVSSSLHRNFHSSIRRF). The 282-residue stretch at 68–349 (SRLRNIGVSA…AVVDYLPQPN (282 aa)) folds into the tr-type G domain. Residues 77–84 (AHIDSGKT), 148–152 (DTPGH), and 202–205 (NKMD) contribute to the GTP site.

The protein belongs to the TRAFAC class translation factor GTPase superfamily. Classic translation factor GTPase family. EF-G/EF-2 subfamily.

The protein resides in the mitochondrion. Its pathway is protein biosynthesis; polypeptide chain elongation. In terms of biological role, mitochondrial GTPase that catalyzes the GTP-dependent ribosomal translocation step during translation elongation. During this step, the ribosome changes from the pre-translocational (PRE) to the post-translocational (POST) state as the newly formed A-site-bound peptidyl-tRNA and P-site-bound deacylated tRNA move to the P and E sites, respectively. Catalyzes the coordinated movement of the two tRNA molecules, the mRNA and conformational changes in the ribosome. The sequence is that of Elongation factor G, mitochondrial from Meyerozyma guilliermondii (strain ATCC 6260 / CBS 566 / DSM 6381 / JCM 1539 / NBRC 10279 / NRRL Y-324) (Yeast).